The sequence spans 749 residues: Catalase-peroxidase 2 (749 aa).

Residues methionine 1–alanine 27 form the signal peptide. Positions tryptophan 107–tyrosine 229 form a cross-link, tryptophyl-tyrosyl-methioninium (Trp-Tyr) (with M-255). The active-site Proton acceptor is the histidine 108. Positions tyrosine 229–methionine 255 form a cross-link, tryptophyl-tyrosyl-methioninium (Tyr-Met) (with W-107). Histidine 270 provides a ligand contact to heme b.

It belongs to the peroxidase family. Peroxidase/catalase subfamily. As to quaternary structure, homodimer or homotetramer. Heme b serves as cofactor. Formation of the three residue Trp-Tyr-Met cross-link is important for the catalase, but not the peroxidase activity of the enzyme.

It catalyses the reaction H2O2 + AH2 = A + 2 H2O. The enzyme catalyses 2 H2O2 = O2 + 2 H2O. Functionally, bifunctional enzyme with both catalase and broad-spectrum peroxidase activity. In Legionella pneumophila (strain Lens), this protein is Catalase-peroxidase 2.